The sequence spans 786 residues: Digalactosyldiacylglycerol synthase 1, chloroplastic (786 aa).

Residues 1 to 25 constitute a chloroplast transit peptide; that stretch reads MASQRQPPSSSNAFSFLSKGWREVR.

This sequence belongs to the glycosyltransferase group 1 family. Glycosyltransferase 4 subfamily. In terms of tissue distribution, high expression in nodules infected cells, but low in nodule inner cortex and root central cylinder.

The protein resides in the plastid. It is found in the chloroplast outer membrane. The protein localises to the plastid outer membrane. It catalyses the reaction a 1,2-diacyl-3-O-(beta-D-galactosyl)-sn-glycerol + UDP-alpha-D-galactose = a 1,2-diacyl-3-O-[alpha-D-galactosyl-(1-&gt;6)-beta-D-galactosyl]-sn-glycerol + UDP + H(+). Functionally, involved in the synthesis of diacylglycerol galactolipids that are specifically found in thylakoid and in nodule peribacteroid membranes. Specific for alpha-glycosidic linkages. The protein is Digalactosyldiacylglycerol synthase 1, chloroplastic of Lotus japonicus (Lotus corniculatus var. japonicus).